Reading from the N-terminus, the 135-residue chain is Galectin-1 (135 aa).

Ala2 is subject to N-acetylalanine. The 132-residue stretch at Gly4–Asp135 folds into the Galectin domain. Residues Lys13 and Lys29 each carry the N6-acetyllysine modification. Ser30 carries the phosphoserine modification. A beta-D-galactoside contacts are provided by residues His45 to Arg49, His53, Asn62, and Trp69 to Glu72. Lys108 bears the N6-acetyllysine; alternate mark. Lys108 carries the N6-succinyllysine; alternate modification. An N6-acetyllysine modification is found at Lys128.

In terms of assembly, homodimer. Binds LGALS3BP. Interacts with CD2, CD3, CD4, CD6, CD7, CD43, ALCAM and CD45. Interacts with laminin (via poly-N-acetyllactosamine). Interacts with SUSD2.

The protein resides in the secreted. It is found in the extracellular space. It localises to the extracellular matrix. In terms of biological role, lectin that binds beta-galactoside and a wide array of complex carbohydrates. Plays a role in regulating apoptosis, cell proliferation and cell differentiation. Inhibits CD45 protein phosphatase activity and therefore the dephosphorylation of Lyn kinase. Strong inducer of T-cell apoptosis. This Pongo abelii (Sumatran orangutan) protein is Galectin-1 (LGALS1).